Reading from the N-terminus, the 2262-residue chain is Klarsicht protein (2262 aa).

Disordered stretches follow at residues Met-1–Asp-140, Gln-345–Asn-410, Ala-442–Val-475, Gln-514–Gly-561, Ala-800–Asn-832, Ser-859–Met-898, His-1000–Val-1031, Pro-1115–Phe-1157, Ser-1246–Gly-1316, and Val-1533–Arg-1670. A required for apical microtubules localization region spans residues Met-1 to Glu-1774. Residues Met-1–Arg-2215 are Cytoplasmic-facing. Positions Lys-58–Lys-67 are enriched in basic and acidic residues. Over residues Asn-131–Asp-140 the composition is skewed to polar residues. Residues Gln-345–His-402 show a composition bias toward low complexity. The segment covering Leu-446–Val-475 has biased composition (acidic residues). Over residues Gln-514–Gln-525 the composition is skewed to low complexity. Residues Glu-546–Ile-560 show a composition bias toward acidic residues. Low complexity-rich tracts occupy residues Ser-809–Thr-818 and Ser-859–Asn-881. Residues Gly-882–Thr-894 are compositionally biased toward polar residues. Low complexity predominate over residues Pro-1006–Ser-1018. A compositionally biased stretch (polar residues) spans Asn-1019 to Val-1028. The segment covering Ser-1246–Asp-1259 has biased composition (polar residues). The segment covering Pro-1267–Ala-1280 has biased composition (low complexity). Positions Ser-1288–Ile-1299 are enriched in basic residues. A compositionally biased stretch (low complexity) spans Gln-1550–Gln-1559. The segment covering Val-1560–Gln-1583 has biased composition (polar residues). Basic and acidic residues-rich tracts occupy residues His-1586–Asp-1596 and Arg-1610–Ile-1640. Residues Leu-1809–Lys-1842 are a coiled coil. A disordered region spans residues His-2092–Ser-2205. Over residues Gln-2093 to Gln-2105 the composition is skewed to low complexity. Basic residues predominate over residues Arg-2130–Lys-2142. The KASH domain occupies Arg-2207–Ile-2262. Residues Ala-2216 to Pro-2236 traverse the membrane as a helical; Anchor for type IV membrane protein segment. Over Asn-2237–Ile-2262 the chain is Perinuclear space.

This sequence belongs to the nesprin family. As to quaternary structure, core component of LINC complexes which are composed of inner nuclear membrane SUN domain-containing proteins coupled to outer nuclear membrane KASH domain-containing nesprins. Interacts with kud. Interacts with Msp300; this interaction allows the anchoring of Msp300 nuclear ring structure to the nuclear envelope. In terms of tissue distribution, expressed ubiquitously in the eye disk, but at much higher levels posterior to the morphogenetic furrow. Expressed in R-cells and also in non-neural cone cells.

It is found in the cytoplasm. The protein localises to the cytoskeleton. Its subcellular location is the microtubule organizing center. The protein resides in the perinuclear region. It localises to the nucleus membrane. It is found in the nucleus envelope. Its function is as follows. Component of the LINC (LInker of Nucleoskeleton and Cytoskeleton) complex involved in the connection between the nuclear lamina and the cytoskeleton. Plays a role in the nuclear positioning and links the nucleus to the microtubule organizing center (MTOC). Collaborates with Klar to promote even spacing of the myonuclei at the periphery of striated muscle fibers by mediating a tight association between a nuclear ring structure of Msp300 and the plus ends of a unique astral microtubule (MT) network. This is Klarsicht protein from Drosophila melanogaster (Fruit fly).